The chain runs to 365 residues: GTPase Obg (365 aa).

In terms of domain architecture, Obg spans 1-159; that stretch reads MKFIDEARIE…RMLKLELKVL (159 aa). An OBG-type G domain is found at 160–334; that stretch reads ADVGLLGMPN…LIYAIKDHLQ (175 aa). GTP is bound by residues 166–173, 191–195, 213–216, 284–287, and 315–317; these read GMPNAGKS, FTTLH, DIPG, NKLD, and SAL. The Mg(2+) site is built by Ser173 and Thr193.

It belongs to the TRAFAC class OBG-HflX-like GTPase superfamily. OBG GTPase family. As to quaternary structure, monomer. It depends on Mg(2+) as a cofactor.

The protein resides in the cytoplasm. Functionally, an essential GTPase which binds GTP, GDP and possibly (p)ppGpp with moderate affinity, with high nucleotide exchange rates and a fairly low GTP hydrolysis rate. Plays a role in control of the cell cycle, stress response, ribosome biogenesis and in those bacteria that undergo differentiation, in morphogenesis control. In Cupriavidus taiwanensis (strain DSM 17343 / BCRC 17206 / CCUG 44338 / CIP 107171 / LMG 19424 / R1) (Ralstonia taiwanensis (strain LMG 19424)), this protein is GTPase Obg.